The chain runs to 572 residues: Hemolysin-1 (572 aa).

Functionally, bacterial hemolysins are exotoxins that attack blood cell membranes and cause cell rupture by mechanisms not clearly defined. This is Hemolysin-1 (ash1) from Aeromonas salmonicida.